The following is a 716-amino-acid chain: Splicing factor Cactin (716 aa).

Positions 1-104 (MGSHGKGKRD…SKKAQKKALR (104 aa)) are disordered. Positions 10-22 (DRSGRQKKRRDES) are enriched in basic and acidic residues. Residues 25-45 (GSESESYTSDSDGSDDLSPPR) show a composition bias toward low complexity. A compositionally biased stretch (basic residues) spans 46-61 (SSRRKKGSSSRRTRRR). Residues 81–95 (SSKDYSEEKVTEYMS) are compositionally biased toward basic and acidic residues. Positions 153 to 201 (SVKAEKRRHRERMTEVEKVKKRREERAVEKARHEEEMALLARERARAEF) form a coiled coil. Ser-450 is modified (phosphoserine). A disordered region spans residues 466 to 525 (VEENEEEINDTNLSDAEEAFSPEPVAEEEEADEAAEAAGSFSPELMHGDDREEAIDPEED). Acidic residues predominate over residues 468–500 (ENEEEINDTNLSDAEEAFSPEPVAEEEEADEAA).

The protein belongs to the CACTIN family. As to quaternary structure, interacts with At5g63440.

It is found in the nucleus speckle. Plays a role in pre-mRNA splicing by facilitating excision of a subset of introns. Required for embryogenesis. This Arabidopsis thaliana (Mouse-ear cress) protein is Splicing factor Cactin (CTN).